A 691-amino-acid chain; its full sequence is F-box/LRR-repeat protein 5 (691 aa).

The hemerythrin-like stretch occupies residues 1–159; that stretch reads MAPFPEEVDV…IKKKVIAQHC (159 aa). Fe(3+) is bound by residues histidine 15, histidine 57, glutamate 58, glutamate 61, histidine 80, histidine 126, and glutamate 130. The F-box domain occupies 202-248; it reads STGITHLPPEVMLSIFSYLNPQELCRCSQVSMKWSQLTKTGSLWKHL. LRR repeat units follow at residues 340–364, 365–392, 393–418, 479–508, 576–607, 608–635, and 636–661; these read SSAVSSKMVRQILELCPNLEHLDLT, QTDISDSAFDSWSWLGCCQSLRHLDLSG, CEKITDVALEKISRALGILTSHQSGF, LWMLDAEDLADIEDTVEWRHRNVESLCVVE, TRLPRGKDLIYFGSEKSDQETGRVLLFLSLSG, CYQITDHGLRVLTLGGGLPYLEHLNLSG, and CLTITGAGLQDLVSACPSLNDEYFYY. [2Fe-2S] cluster is bound by residues cysteine 662, cysteine 676, cysteine 686, and cysteine 687.

In terms of assembly, part of a SCF (SKP1-cullin-F-box) protein ligase complex. Interacts with ACO1/IRP1, IREB2/IRP2; the interaction depends on the [2Fe-2S] cluster. Interacts with DCTN1/p150-glued. [2Fe-2S] cluster is required as a cofactor. In terms of processing, polybiquitinated upon iron and oxygen depletion, leading to its degradation by the proteasome. Ubiquitination is regulated by the hemerythrin-like region that acts as an oxygen and iron sensor. Undergoes constitutive ubiquitin-dependent degradation at the steady state by HERC2.

It localises to the cytoplasm. Its subcellular location is the perinuclear region. It is found in the nucleus. The protein operates within protein modification; protein ubiquitination. Its activity is regulated as follows. An iron-sulfur cluster promotes IRP2 polyubiquitination and degradation in response to both iron and oxygen concentrations. In terms of biological role, component of some SCF (SKP1-cullin-F-box) protein ligase complex that plays a central role in iron homeostasis by promoting the ubiquitination and subsequent degradation of IREB2/IRP2. The C-terminal domain of FBXL5 contains a redox-sensitive [2Fe-2S] cluster that, upon oxidation, promotes binding to IRP2 to effect its oxygen-dependent degradation. Under iron deficiency conditions, the N-terminal hemerythrin-like (Hr) region, which contains a diiron metal center, cannot bind iron and undergoes conformational changes that destabilize the FBXL5 protein and cause its ubiquitination and degradation. When intracellular iron levels start rising, the Hr region is stabilized. Additional increases in iron levels facilitate the assembly and incorporation of a redox active [2Fe-2S] cluster in the C-terminal domain. Only when oxygen level is high enough to maintain the cluster in its oxidized state can FBXL5 recruit IRP2 as a substrate for polyubiquination and degradation. Promotes ubiquitination and subsequent degradation of the dynactin complex component DCTN1. Within the nucleus, promotes the ubiquitination of SNAI1; preventing its interaction with DNA and promoting its degradation. Negatively regulates DNA damage response by mediating the ubiquitin-proteasome degradation of the DNA repair protein NABP2. This chain is F-box/LRR-repeat protein 5 (FBXL5), found in Pongo abelii (Sumatran orangutan).